The following is a 74-amino-acid chain: Exodeoxyribonuclease 7 small subunit (74 aa).

Belongs to the XseB family. In terms of assembly, heterooligomer composed of large and small subunits.

The protein resides in the cytoplasm. The enzyme catalyses Exonucleolytic cleavage in either 5'- to 3'- or 3'- to 5'-direction to yield nucleoside 5'-phosphates.. Bidirectionally degrades single-stranded DNA into large acid-insoluble oligonucleotides, which are then degraded further into small acid-soluble oligonucleotides. The chain is Exodeoxyribonuclease 7 small subunit from Leuconostoc citreum (strain KM20).